The following is a 494-amino-acid chain: Folate-biopterin transporter (494 aa).

12 helical membrane passes run 31-51, 64-84, 104-124, 133-153, 170-190, 197-217, 246-266, 284-303, 310-330, 346-366, 375-395, and 415-435; these read APSWELLAILSIYFVQGVLGL, LGLSPAAMGALIGLGAAPWIL, SYLWLSGLMGSAGWLLFAAWV, VLLFTSLSVAIGDVIVDSLVV, LTWGAAAVGGIITAYASGALL, TVFAITAIFPLLTVGAAFLIS, ILLPTLFIFFWQATPSAESAF, VRLVTSVAGLIGVGLYQRFL, VIMGWSTVISSLLGLTTLILI, LGDSIILTVTGQIAFMPVLVL, IEATLFALLMSVMNLAGVLSF, and LALLVIITNLSTLLPLPFLGL. Residues 441–461 are disordered; that stretch reads PQVKDKTEKEDNPDDPGDRLV.

Belongs to the major facilitator superfamily. Folate-biopterin transporter (TC 2.A.71) family.

Its subcellular location is the cell membrane. Functionally, mediates folate monoglutamate transport involved in tetrahydrofolate biosynthesis. It also mediates transport of antifolates, such as methotrexate and aminopterin. This Synechocystis sp. (strain ATCC 27184 / PCC 6803 / Kazusa) protein is Folate-biopterin transporter.